The primary structure comprises 229 residues: Phosphoglycolate phosphatase (229 aa).

Aspartate 18 serves as the catalytic Nucleophile. Mg(2+)-binding residues include aspartate 18, aspartate 20, and aspartate 176.

It belongs to the HAD-like hydrolase superfamily. CbbY/CbbZ/Gph/YieH family. The cofactor is Mg(2+).

It carries out the reaction 2-phosphoglycolate + H2O = glycolate + phosphate. The protein operates within organic acid metabolism; glycolate biosynthesis; glycolate from 2-phosphoglycolate: step 1/1. Its function is as follows. Specifically catalyzes the dephosphorylation of 2-phosphoglycolate. Is involved in the dissimilation of the intracellular 2-phosphoglycolate formed during the DNA repair of 3'-phosphoglycolate ends, a major class of DNA lesions induced by oxidative stress. This chain is Phosphoglycolate phosphatase, found in Xylella fastidiosa (strain Temecula1 / ATCC 700964).